The sequence spans 274 residues: Diaminopimelate epimerase (274 aa).

Substrate is bound by residues N11, Q44, and N64. C73 serves as the catalytic Proton donor. Substrate contacts are provided by residues 74–75 (GN), N157, N190, and 208–209 (ER). C217 (proton acceptor) is an active-site residue. Residue 218–219 (GS) coordinates substrate.

Belongs to the diaminopimelate epimerase family. Homodimer.

It localises to the cytoplasm. It carries out the reaction (2S,6S)-2,6-diaminopimelate = meso-2,6-diaminopimelate. It functions in the pathway amino-acid biosynthesis; L-lysine biosynthesis via DAP pathway; DL-2,6-diaminopimelate from LL-2,6-diaminopimelate: step 1/1. Catalyzes the stereoinversion of LL-2,6-diaminopimelate (L,L-DAP) to meso-diaminopimelate (meso-DAP), a precursor of L-lysine and an essential component of the bacterial peptidoglycan. The polypeptide is Diaminopimelate epimerase (Haemophilus influenzae (strain PittEE)).